We begin with the raw amino-acid sequence, 134 residues long: MWSDPIADMLTRIRNANMVFKEYTDIPASNLKKKICEILKREGFIADYKYIEDGKQGILRVYLKYKGGRKNRERVIHGIVRVSHSGRRIYVDKDHIPKVKNGLGIAILTTSKGVLTDKEARQLGVGGEVIAYVW.

This sequence belongs to the universal ribosomal protein uS8 family. As to quaternary structure, part of the 30S ribosomal subunit. Contacts proteins S5 and S12.

Functionally, one of the primary rRNA binding proteins, it binds directly to 16S rRNA central domain where it helps coordinate assembly of the platform of the 30S subunit. In Thermotoga sp. (strain RQ2), this protein is Small ribosomal subunit protein uS8.